We begin with the raw amino-acid sequence, 509 residues long: Cytochrome P450 monooxygenase traB (509 aa).

A helical transmembrane segment spans residues 8–28 (LVELVSITGGLIVLFIAYTGF). C453 is a heme binding site.

Belongs to the cytochrome P450 family. Heme is required as a cofactor.

The protein resides in the membrane. It participates in secondary metabolite biosynthesis. Cytochrome P450 monooxygenase; part of the tra gene cluster that produces terrestric acid. The clavatol biosynthesis cluster cla and the terrestric acid cluster tra are both involved in the production of peniphenones and penilactones. The non-reducing PKS claF is responsible for the formation of clavatol from successive condensations of 3 malonyl-CoA units, presumably with a simple acetyl-CoA starter unit, and 2 methylation steps. The esterase claE probably collaborates with claF by catalyzing the hydrolysis of ACP-bound acyl intermediates to free the ACP from stalled intermediates. The clavatol oxidase claD then converts clavatol to hydroxyclavatol. Spontaneous dehydration of hydroxyclavatol leads to the accumulation of the highly active ortho-quinone methide. On the other hand, the PKS-NRPS hybrid traA is involved in the formation of crustosic acid, with the help of traB and traD. The polyketide synthase module (PKS) of traA is responsible for the synthesis of the polyketide backbone via the condensation of an acetyl-CoA starter unit with 3 malonyl-CoA units. The downstream nonribosomal peptide synthetase (NRPS) module then amidates the carboxyl end of the polyketide with L-malic acid. Because traA lacks a designated enoylreductase (ER) domain, the required activity is provided the enoyl reductase traG. Crustosic acid undergoes decarboxylation and isomerization to the terrestric acid, catalyzed by the 2-oxoglutarate-dependent dioxygenase traH. Both acids are further converted to the 2 gamma-butyrolactones (R)-5-methyltetronic acid and (S)-5-carboxylmethyltetronic acid, with involvement of the cytochrome P450 monooxygenase claJ. Spontaneous addition of the methide to these gamma-butyrolactones leads to peniphenone D and penilactone D, which undergo again stereospecific attacking by methide to give penilactones A and B. This chain is Cytochrome P450 monooxygenase traB, found in Penicillium crustosum (Blue mold fungus).